A 204-amino-acid polypeptide reads, in one-letter code: Large ribosomal subunit protein eL15B (204 aa).

The segment at 165 to 185 (TATGKKSRGINKGHKFNNTKA) is disordered. Residues 169-185 (KKSRGINKGHKFNNTKA) show a composition bias toward basic residues.

It belongs to the eukaryotic ribosomal protein eL15 family. In terms of assembly, component of the large ribosomal subunit (LSU). Mature yeast ribosomes consist of a small (40S) and a large (60S) subunit. The 40S small subunit contains 1 molecule of ribosomal RNA (18S rRNA) and 33 different proteins (encoded by 57 genes). The large 60S subunit contains 3 rRNA molecules (25S, 5.8S and 5S rRNA) and 46 different proteins (encoded by 81 genes).

It is found in the cytoplasm. Component of the ribosome, a large ribonucleoprotein complex responsible for the synthesis of proteins in the cell. The small ribosomal subunit (SSU) binds messenger RNAs (mRNAs) and translates the encoded message by selecting cognate aminoacyl-transfer RNA (tRNA) molecules. The large subunit (LSU) contains the ribosomal catalytic site termed the peptidyl transferase center (PTC), which catalyzes the formation of peptide bonds, thereby polymerizing the amino acids delivered by tRNAs into a polypeptide chain. The nascent polypeptides leave the ribosome through a tunnel in the LSU and interact with protein factors that function in enzymatic processing, targeting, and the membrane insertion of nascent chains at the exit of the ribosomal tunnel. This is Large ribosomal subunit protein eL15B from Saccharomyces cerevisiae (strain ATCC 204508 / S288c) (Baker's yeast).